The primary structure comprises 408 residues: Argininosuccinate synthase (408 aa).

Residues alanine 11 to serine 19 and alanine 38 contribute to the ATP site. Tyrosine 91 and serine 96 together coordinate L-citrulline. Position 121 (glycine 121) interacts with ATP. L-aspartate-binding residues include threonine 123, asparagine 127, and aspartate 128. Asparagine 127 provides a ligand contact to L-citrulline. Arginine 131, serine 182, serine 191, glutamate 267, and tyrosine 279 together coordinate L-citrulline.

It belongs to the argininosuccinate synthase family. Type 1 subfamily. Homotetramer.

Its subcellular location is the cytoplasm. It catalyses the reaction L-citrulline + L-aspartate + ATP = 2-(N(omega)-L-arginino)succinate + AMP + diphosphate + H(+). It participates in amino-acid biosynthesis; L-arginine biosynthesis; L-arginine from L-ornithine and carbamoyl phosphate: step 2/3. The chain is Argininosuccinate synthase from Paracoccus denitrificans (strain Pd 1222).